Reading from the N-terminus, the 172-residue chain is Type IV secretion system putative outer membrane lipoprotein BRA0058/BS1330_II0058 (172 aa).

Residues 1–15 (MRTLVMVACAVSLAA) form the signal peptide. Cys-16 carries the N-palmitoyl cysteine lipid modification. Cys-16 carries S-diacylglycerol cysteine lipidation. Residues 58–172 (WPARPPKQTV…RRVDIEILRK (115 aa)) enclose the OmpA-like domain.

Its subcellular location is the cell outer membrane. Functionally, the VirB system could be required for the establishment of the replication niche in the host. This Brucella suis biovar 1 (strain 1330) protein is Type IV secretion system putative outer membrane lipoprotein BRA0058/BS1330_II0058.